Reading from the N-terminus, the 339-residue chain is Anthranilate phosphoribosyltransferase (339 aa).

5-phospho-alpha-D-ribose 1-diphosphate contacts are provided by residues G80, 83 to 84, 90 to 93, 108 to 116, and S120; these read GD, NVST, and KHGNRSVTS. G80 is an anthranilate binding site. S92 provides a ligand contact to Mg(2+). N111 lines the anthranilate pocket. R166 contributes to the anthranilate binding site. Residues D225 and E226 each contribute to the Mg(2+) site.

It belongs to the anthranilate phosphoribosyltransferase family. As to quaternary structure, homodimer. Mg(2+) serves as cofactor.

It catalyses the reaction N-(5-phospho-beta-D-ribosyl)anthranilate + diphosphate = 5-phospho-alpha-D-ribose 1-diphosphate + anthranilate. Its pathway is amino-acid biosynthesis; L-tryptophan biosynthesis; L-tryptophan from chorismate: step 2/5. Its function is as follows. Catalyzes the transfer of the phosphoribosyl group of 5-phosphorylribose-1-pyrophosphate (PRPP) to anthranilate to yield N-(5'-phosphoribosyl)-anthranilate (PRA). This is Anthranilate phosphoribosyltransferase from Ignicoccus hospitalis (strain KIN4/I / DSM 18386 / JCM 14125).